Here is a 506-residue protein sequence, read N- to C-terminus: Cobyric acid synthase (506 aa).

The 200-residue stretch at 254–453 (DLDIAVIRLP…IHGIFESDSF (200 aa)) folds into the GATase cobBQ-type domain. Cysteine 334 (nucleophile) is an active-site residue. Histidine 445 is an active-site residue.

Belongs to the CobB/CobQ family. CobQ subfamily.

Its pathway is cofactor biosynthesis; adenosylcobalamin biosynthesis. Catalyzes amidations at positions B, D, E, and G on adenosylcobyrinic A,C-diamide. NH(2) groups are provided by glutamine, and one molecule of ATP is hydrogenolyzed for each amidation. The sequence is that of Cobyric acid synthase from Dehalococcoides mccartyi (strain ATCC BAA-2266 / KCTC 15142 / 195) (Dehalococcoides ethenogenes (strain 195)).